Consider the following 231-residue polypeptide: MQYEVVLPAAGSGKRMGAGQNKLFLKLLKKPILIHTLEVFQQDPFCTGIWLAVKPEERIYIQELLDEYRITKVKGLPNGGAERQHSVHSCMKEMEQVDIVLVHDAARPFITHAIIANLVQSAHDFGAAIAGVRAKDTMKKVRNGVIEETVDRDSLWMIQTPQAFRFDLIVEAEDVAEKVGFLGTDEAMLVERLGHTVHIVESSYENVKMTTQEDLLFGEAILRKRALQLNE.

It belongs to the IspD/TarI cytidylyltransferase family. IspD subfamily.

The enzyme catalyses 2-C-methyl-D-erythritol 4-phosphate + CTP + H(+) = 4-CDP-2-C-methyl-D-erythritol + diphosphate. The protein operates within isoprenoid biosynthesis; isopentenyl diphosphate biosynthesis via DXP pathway; isopentenyl diphosphate from 1-deoxy-D-xylulose 5-phosphate: step 2/6. In terms of biological role, catalyzes the formation of 4-diphosphocytidyl-2-C-methyl-D-erythritol from CTP and 2-C-methyl-D-erythritol 4-phosphate (MEP). This chain is 2-C-methyl-D-erythritol 4-phosphate cytidylyltransferase, found in Lysinibacillus sphaericus (strain C3-41).